A 577-amino-acid chain; its full sequence is Arginine--tRNA ligase (577 aa).

Positions 123–133 match the 'HIGH' region motif; that stretch reads PNVAKEMHVGH.

The protein belongs to the class-I aminoacyl-tRNA synthetase family. In terms of assembly, monomer.

The protein resides in the cytoplasm. The enzyme catalyses tRNA(Arg) + L-arginine + ATP = L-arginyl-tRNA(Arg) + AMP + diphosphate. This is Arginine--tRNA ligase from Cronobacter sakazakii (strain ATCC BAA-894) (Enterobacter sakazakii).